A 454-amino-acid polypeptide reads, in one-letter code: Zeatin O-xylosyltransferase (454 aa).

It belongs to the UDP-glycosyltransferase family. As to expression, high level in young seeds, less in older seeds and very low in roots.

It carries out the reaction zeatin + UDP-alpha-D-xylose = O-beta-D-xylosylzeatin + UDP + H(+). Functionally, utilizes UDP-xylose as the sugar donor and catalyzes the formation of o-xylosylzeatin from zeatin. Does not act on UDP-glucose. The chain is Zeatin O-xylosyltransferase from Phaseolus vulgaris (Kidney bean).